A 405-amino-acid chain; its full sequence is Arginine deiminase (405 aa).

C395 functions as the Amidino-cysteine intermediate in the catalytic mechanism.

It belongs to the arginine deiminase family.

It localises to the cytoplasm. It carries out the reaction L-arginine + H2O = L-citrulline + NH4(+). It participates in amino-acid degradation; L-arginine degradation via ADI pathway; carbamoyl phosphate from L-arginine: step 1/2. This is Arginine deiminase from Rhodococcus jostii (strain RHA1).